The following is a 349-amino-acid chain: tRNA pseudouridine synthase D (349 aa).

Phe27 provides a ligand contact to substrate. Catalysis depends on Asp80, which acts as the Nucleophile. A substrate-binding site is contributed by Asn129. The 149-residue stretch at 155-303 (GVPNYFGAQR…VEASRRAMLL (149 aa)) folds into the TRUD domain. Phe329 is a substrate binding site.

Belongs to the pseudouridine synthase TruD family.

It carries out the reaction uridine(13) in tRNA = pseudouridine(13) in tRNA. Responsible for synthesis of pseudouridine from uracil-13 in transfer RNAs. In Salmonella newport (strain SL254), this protein is tRNA pseudouridine synthase D.